The following is a 132-amino-acid chain: Fibroblast growth factor 1 (132 aa).

Heparin contacts are provided by residues asparagine 10 and 108–120; that span reads KTKP…FGQK.

Belongs to the heparin-binding growth factors family.

It localises to the secreted. It is found in the cytoplasm. Its subcellular location is the cell cortex. The protein resides in the cytosol. The protein localises to the nucleus. Its function is as follows. Plays an important role in the regulation of cell survival, cell division, angiogenesis, cell differentiation and cell migration. Functions as a potent mitogen in vitro. Acts as a ligand for FGFR1 and integrins. Binds to FGFR1 in the presence of heparin leading to FGFR1 dimerization and activation via sequential autophosphorylation on tyrosine residues which act as docking sites for interacting proteins, leading to the activation of several signaling cascades. Binds to integrins. Its binding to integrins and subsequent ternary complex formation with integrins and FGFR1 are essential for FGF1 signaling. In Notophthalmus viridescens (Eastern newt), this protein is Fibroblast growth factor 1 (fgf1).